Consider the following 568-residue polypeptide: Phosphomethylpyrimidine synthase (568 aa).

Substrate is bound by residues Asn188, Met217, Tyr246, His282, 302–304, 343–346, and Glu382; these read SRG and DGLR. A Zn(2+)-binding site is contributed by His386. A substrate-binding site is contributed by Tyr409. His450 is a binding site for Zn(2+). Positions 530, 533, and 538 each coordinate [4Fe-4S] cluster.

The protein belongs to the ThiC family. Homodimer. [4Fe-4S] cluster is required as a cofactor.

The catalysed reaction is 5-amino-1-(5-phospho-beta-D-ribosyl)imidazole + S-adenosyl-L-methionine = 4-amino-2-methyl-5-(phosphooxymethyl)pyrimidine + CO + 5'-deoxyadenosine + formate + L-methionine + 3 H(+). It functions in the pathway cofactor biosynthesis; thiamine diphosphate biosynthesis. Its function is as follows. Catalyzes the synthesis of the hydroxymethylpyrimidine phosphate (HMP-P) moiety of thiamine from aminoimidazole ribotide (AIR) in a radical S-adenosyl-L-methionine (SAM)-dependent reaction. This Idiomarina loihiensis (strain ATCC BAA-735 / DSM 15497 / L2-TR) protein is Phosphomethylpyrimidine synthase.